A 587-amino-acid polypeptide reads, in one-letter code: 5-aminolevulinate synthase, erythroid-specific, mitochondrial (587 aa).

The transit peptide at 1 to 49 directs the protein to the mitochondrion; the sequence is MVTAAMLLQCCPVPARGPTSLLGKVVKTHQFLFGIGRCPILATQGPNCS. Succinyl-CoA is bound at residue arginine 163. Pyridoxal 5'-phosphate-binding residues include cysteine 258 and phenylalanine 259. Serine 280 and lysine 299 together coordinate succinyl-CoA. Pyridoxal 5'-phosphate-binding residues include serine 332, histidine 360, and threonine 388. Lysine 391 is an active-site residue. At lysine 391 the chain carries N6-(pyridoxal phosphate)lysine. Pyridoxal 5'-phosphate is bound by residues threonine 420 and threonine 421. Threonine 508 serves as a coordination point for succinyl-CoA.

It belongs to the class-II pyridoxal-phosphate-dependent aminotransferase family. In terms of assembly, homodimer. Interacts with SUCLA2. The cofactor is pyridoxal 5'-phosphate.

It localises to the mitochondrion inner membrane. It carries out the reaction succinyl-CoA + glycine + H(+) = 5-aminolevulinate + CO2 + CoA. It participates in porphyrin-containing compound metabolism; protoporphyrin-IX biosynthesis; 5-aminolevulinate from glycine: step 1/1. Its function is as follows. Catalyzes the pyridoxal 5'-phosphate (PLP)-dependent condensation of succinyl-CoA and glycine to form aminolevulinic acid (ALA), with CoA and CO2 as by-products. Contributes significantly to heme formation during erythropoiesis. The protein is 5-aminolevulinate synthase, erythroid-specific, mitochondrial (ALAS2) of Pongo abelii (Sumatran orangutan).